The following is a 218-amino-acid chain: Probable GTP-binding protein EngB (218 aa).

Positions 31-205 (VGVEIAFAGR…LGILNEWCHP (175 aa)) constitute an EngB-type G domain. GTP contacts are provided by residues 39–46 (GRSNAGKS), 66–70 (GRTQL), 84–87 (DLPG), 151–154 (TKCD), and 184–186 (FSS). 2 residues coordinate Mg(2+): Ser-46 and Thr-68.

Belongs to the TRAFAC class TrmE-Era-EngA-EngB-Septin-like GTPase superfamily. EngB GTPase family. It depends on Mg(2+) as a cofactor.

Its function is as follows. Necessary for normal cell division and for the maintenance of normal septation. In Shewanella loihica (strain ATCC BAA-1088 / PV-4), this protein is Probable GTP-binding protein EngB.